The primary structure comprises 311 residues: Replication initiation protein (311 aa).

This sequence belongs to the plasmid replication initiation factor family.

In terms of biological role, this protein is probably a specific topoisomerase involved in initiating replication. This protein is specifically required and may be rate-limiting for replication of the plasmid in vivo. This chain is Replication initiation protein (repD), found in Staphylococcus aureus.